Reading from the N-terminus, the 352-residue chain is Inhibin beta C chain (352 aa).

The first 18 residues, 1–18, serve as a signal peptide directing secretion; that stretch reads MTSSLLLAFLLLAPTTVA. Residues 19 to 236 constitute a propeptide that is removed on maturation; that stretch reads TPRAGGQCPA…VGGKHQIHRR (218 aa). N-linked (GlcNAc...) asparagine glycans are attached at residues Asn110, Asn143, and Asn161. 4 disulfides stabilise this stretch: Cys240–Cys248, Cys247–Cys317, Cys276–Cys349, and Cys280–Cys351.

It belongs to the TGF-beta family. In terms of assembly, homodimeric or heterodimeric through association with alpha and beta subunits, linked by one or more disulfide bonds. Inhibins are heterodimers of one alpha and one beta subunit. Activins are homo- or heterodimers of beta subunits only. As to expression, expressed in benign prostatic hyperplasia.

Its subcellular location is the secreted. Its function is as follows. Inhibins and activins inhibit and activate, respectively, the secretion of follitropin by the pituitary gland. Inhibins/activins are involved in regulating a number of diverse functions such as hypothalamic and pituitary hormone secretion, gonadal hormone secretion, germ cell development and maturation, erythroid differentiation, insulin secretion, nerve cell survival, embryonic axial development or bone growth, depending on their subunit composition. Inhibins appear to oppose the functions of activins. In Homo sapiens (Human), this protein is Inhibin beta C chain (INHBC).